A 179-amino-acid polypeptide reads, in one-letter code: UPF0167 protein PA1536 (179 aa).

Belongs to the UPF0167 family.

The chain is UPF0167 protein PA1536 from Pseudomonas aeruginosa (strain ATCC 15692 / DSM 22644 / CIP 104116 / JCM 14847 / LMG 12228 / 1C / PRS 101 / PAO1).